The sequence spans 81 residues: Large ribosomal subunit protein bL31B (81 aa).

This sequence belongs to the bacterial ribosomal protein bL31 family. Type B subfamily. In terms of assembly, part of the 50S ribosomal subunit.

The chain is Large ribosomal subunit protein bL31B from Exiguobacterium sibiricum (strain DSM 17290 / CCUG 55495 / CIP 109462 / JCM 13490 / 255-15).